We begin with the raw amino-acid sequence, 238 residues long: Large ribosomal subunit protein uL3 (238 aa).

Gln-157 bears the N5-methylglutamine mark.

This sequence belongs to the universal ribosomal protein uL3 family. Part of the 50S ribosomal subunit. Forms a cluster with proteins L14 and L19. In terms of processing, methylated by PrmB.

Its function is as follows. One of the primary rRNA binding proteins, it binds directly near the 3'-end of the 23S rRNA, where it nucleates assembly of the 50S subunit. This is Large ribosomal subunit protein uL3 from Ruthia magnifica subsp. Calyptogena magnifica.